The chain runs to 401 residues: Beta-ketoadipyl-CoA thiolase (401 aa).

Catalysis depends on C90, which acts as the Acyl-thioester intermediate. Active-site proton acceptor residues include H357 and C387.

Belongs to the thiolase-like superfamily. Thiolase family.

It catalyses the reaction succinyl-CoA + acetyl-CoA = 3-oxoadipyl-CoA + CoA. It functions in the pathway aromatic compound metabolism; beta-ketoadipate pathway; acetyl-CoA and succinyl-CoA from 3-oxoadipate: step 2/2. In terms of biological role, catalyzes thiolytic cleavage of beta-ketoadipyl-CoA to succinyl-CoA and acetyl-CoA. The chain is Beta-ketoadipyl-CoA thiolase (catF) from Acinetobacter baylyi (strain ATCC 33305 / BD413 / ADP1).